We begin with the raw amino-acid sequence, 99 residues long: DNA-binding protein Fis (99 aa).

Residues 75–94 (QTRAAIMMGINRGTLRKKLK) constitute a DNA-binding region (H-T-H motif).

The protein belongs to the transcriptional regulatory Fis family. Homodimer.

In terms of biological role, activates ribosomal RNA transcription. Plays a direct role in upstream activation of rRNA promoters. This is DNA-binding protein Fis from Tolumonas auensis (strain DSM 9187 / NBRC 110442 / TA 4).